Reading from the N-terminus, the 98-residue chain is Aspartyl/glutamyl-tRNA(Asn/Gln) amidotransferase subunit C (98 aa).

Belongs to the GatC family. In terms of assembly, heterotrimer of A, B and C subunits.

It catalyses the reaction L-glutamyl-tRNA(Gln) + L-glutamine + ATP + H2O = L-glutaminyl-tRNA(Gln) + L-glutamate + ADP + phosphate + H(+). The catalysed reaction is L-aspartyl-tRNA(Asn) + L-glutamine + ATP + H2O = L-asparaginyl-tRNA(Asn) + L-glutamate + ADP + phosphate + 2 H(+). Functionally, allows the formation of correctly charged Asn-tRNA(Asn) or Gln-tRNA(Gln) through the transamidation of misacylated Asp-tRNA(Asn) or Glu-tRNA(Gln) in organisms which lack either or both of asparaginyl-tRNA or glutaminyl-tRNA synthetases. The reaction takes place in the presence of glutamine and ATP through an activated phospho-Asp-tRNA(Asn) or phospho-Glu-tRNA(Gln). This chain is Aspartyl/glutamyl-tRNA(Asn/Gln) amidotransferase subunit C, found in Beutenbergia cavernae (strain ATCC BAA-8 / DSM 12333 / CCUG 43141 / JCM 11478 / NBRC 16432 / NCIMB 13614 / HKI 0122).